Consider the following 174-residue polypeptide: Large ribosomal subunit protein uL18 (174 aa).

Belongs to the universal ribosomal protein uL18 family. In terms of assembly, part of the 50S ribosomal subunit. Contacts the 5S and 23S rRNAs.

Functionally, this is one of the proteins that bind and probably mediate the attachment of the 5S RNA into the large ribosomal subunit, where it forms part of the central protuberance. The polypeptide is Large ribosomal subunit protein uL18 (Methanoregula boonei (strain DSM 21154 / JCM 14090 / 6A8)).